Here is a 238-residue protein sequence, read N- to C-terminus: CBS domain-containing protein CBSX2, chloroplastic (238 aa).

A chloroplast-targeting transit peptide spans 1–71 (MGSISLSNSM…ASVNNNNSVP (71 aa)). CBS domains lie at 83-145 (MTPR…QNDT) and 177-234 (MTPS…KRET).

The protein resides in the plastid. It localises to the chloroplast stroma. This Arabidopsis thaliana (Mouse-ear cress) protein is CBS domain-containing protein CBSX2, chloroplastic (CBSX2).